A 240-amino-acid chain; its full sequence is MITVEKMLNSSVHLGHKVKQWNPRMRIYIYGERKGLHIIDLLQTIVCLKKACNFLIRSVRKGKRALFVCTKRFFSILTQKIALKCNSFFVTKRWLGGILTNWITIKNCINKLKQLSKQKEKHHNLLTKKERLVLKKKKLKLKKYFSGMRDMTERPEIVIIIGQNKEINAVRECKKLGIASITILDTNCDPTLTKYPIPSNDDSILSVSLILSVLCNSINRGVNNKVRQKFDKYKKFKKLS.

The protein belongs to the universal ribosomal protein uS2 family.

It is found in the plastid. The protein localises to the chloroplast. In Euglena gracilis, this protein is Small ribosomal subunit protein uS2c (rps2).